The chain runs to 307 residues: RHOMBOID-like protein 6, mitochondrial (307 aa).

The N-terminal 62 residues, 1 to 62 (MRSRDMERGR…DCVAKLLRRF (62 aa)), are a transit peptide targeting the mitochondrion. 6 consecutive transmembrane segments (helical) span residues 105–125 (WLHA…IFGI), 136–156 (IGLI…LFLQ), 159–179 (ISVG…SELL), 191–211 (ALLS…LPWV), 214–234 (FAHI…LMQP), and 262–282 (LFFV…VMLF). Ser164 (nucleophile) is an active-site residue. The active-site Charge relay system is His216.

The protein belongs to the peptidase S54 family.

It localises to the mitochondrion membrane. The enzyme catalyses Cleaves type-1 transmembrane domains using a catalytic dyad composed of serine and histidine that are contributed by different transmembrane domains.. In terms of biological role, probable rhomboid-type serine protease that catalyzes intramembrane proteolysis. Might be involved in response to abiotic stimuli. The sequence is that of RHOMBOID-like protein 6, mitochondrial from Arabidopsis thaliana (Mouse-ear cress).